A 519-amino-acid chain; its full sequence is Glutamate--cysteine ligase (519 aa).

The protein belongs to the glutamate--cysteine ligase type 1 family. Type 1 subfamily.

It carries out the reaction L-cysteine + L-glutamate + ATP = gamma-L-glutamyl-L-cysteine + ADP + phosphate + H(+). It participates in sulfur metabolism; glutathione biosynthesis; glutathione from L-cysteine and L-glutamate: step 1/2. The polypeptide is Glutamate--cysteine ligase (Yersinia enterocolitica serotype O:8 / biotype 1B (strain NCTC 13174 / 8081)).